We begin with the raw amino-acid sequence, 203 residues long: Guanylate kinase (203 aa).

Positions 5–183 constitute a Guanylate kinase-like domain; sequence GVLYILSAPS…AVEELKSVII (179 aa). 12-19 is a binding site for ATP; sequence APSGAGKT.

Belongs to the guanylate kinase family.

It localises to the cytoplasm. The enzyme catalyses GMP + ATP = GDP + ADP. Its function is as follows. Essential for recycling GMP and indirectly, cGMP. In Geobacter sulfurreducens (strain ATCC 51573 / DSM 12127 / PCA), this protein is Guanylate kinase.